We begin with the raw amino-acid sequence, 2169 residues long: Voltage-dependent L-type calcium channel subunit alpha-1C (2169 aa).

Residues 1–153 are Cytoplasmic-facing; the sequence is MVPLVQPTTP…RACISIVEWK (153 aa). The calmodulin-binding stretch occupies residues 76-97; the sequence is GAALSWQAAIDAGRQAKLMGSA. Residues 98-108 are compositionally biased toward polar residues; sequence GNTTISTVSST. The tract at residues 98-127 is disordered; that stretch reads GNTTISTVSSTQRKRQQYGKPKKQSGTTAT. The span at 109-120 shows a compositional bias: basic residues; that stretch reads QRKRQQYGKPKK. The I repeat unit spans residues 140–437; that stretch reads NPIRRACISI…LVLGVLSGEF (298 aa). A helical membrane pass occupies residues 154–172; that stretch reads PFEIIILLTIFANCVALAI. At 173–187 the chain is on the extracellular side; that stretch reads YIPFPEDDSNATNSN. A glycan (N-linked (GlcNAc...) asparagine) is linked at asparagine 182. A helical membrane pass occupies residues 188–208; sequence LERVEYLFLIIFTVEAFLKVI. Residues 209–217 lie on the Cytoplasmic side of the membrane; sequence AYGLLFHPN. Residues 218-238 form a helical membrane-spanning segment; sequence AYLRNGWNLLDFIIVVVGLFS. Topologically, residues 239–261 are extracellular; sequence AILEQATKADGANALGGKGAGFD. Residues 262–280 form a helical membrane-spanning segment; that stretch reads VKALRAFRVLRPLRLVSGV. At 281-297 the chain is on the cytoplasmic side; sequence PSLQVVLNSIIKAMVPL. The chain crosses the membrane as a helical span at residues 298 to 319; the sequence is LHTALLVLFVIIIYAIIGLELF. Topologically, residues 320–379 are extracellular; sequence MGKMHKTCYNQEGITDVPAEEDPSPCALESGHGRQCQNGTVCKPGWDGPKHGITNFDNFA. Cysteine 345 and cysteine 361 form a disulfide bridge. Residue asparagine 357 is glycosylated (N-linked (GlcNAc...) asparagine). Positions 380–401 form an intramembrane region, pore-forming; that stretch reads FAMLTVFQCITMEGWTDVLYWM. The Selectivity filter of repeat I signature appears at 390 to 393; that stretch reads TMEG. Glutamate 392 is a Ca(2+) binding site. Residues 402–409 lie on the Extracellular side of the membrane; sequence QDAMGYEL. A helical membrane pass occupies residues 410 to 430; it reads PWVYFVSLVIFGSFFVLNLVL. Residues 431–553 lie on the Cytoplasmic side of the membrane; it reads GVLSGEFSKE…RKCRAAVKSN (123 aa). An AID/alpha-interaction domain; mediates interaction with the beta subunit region spans residues 457–474; that stretch reads QQLEEDLKGYLDWITQAE. The interval 478-510 is disordered; sequence PENEDEGVDEEKPRNMSMPTSETESVNTENVAG. Positions 494–507 are enriched in polar residues; sequence SMPTSETESVNTEN. Residue serine 498 is modified to Phosphoserine. Threonine 505 carries the post-translational modification Phosphothreonine. An II repeat occupies 539 to 785; it reads NRFCRRKCRA…VFLAIAVDNL (247 aa). Residues 554-572 traverse the membrane as a helical segment; sequence VFYWLVIFLVFLNTLTIAS. Topologically, residues 573-583 are extracellular; the sequence is EHYNQPHWLTE. A helical transmembrane segment spans residues 584–604; sequence VQDTANKALLALFTAEMLLKM. Topologically, residues 605–615 are cytoplasmic; the sequence is YSLGLQAYFVS. Residues 616-635 form a helical membrane-spanning segment; sequence LFNRLDCFIVCGGILETILV. At 636–644 the chain is on the extracellular side; it reads ETKIMSPLG. A helical transmembrane segment spans residues 645–663; sequence ISVLRCVRLLRIFKITRYW. Residues 664 to 682 are Cytoplasmic-facing; the sequence is NSLSNLVASLLNSVRSIAS. The chain crosses the membrane as a helical span at residues 683–702; the sequence is LLLLLFLFIIIFSLLGMQLF. The Extracellular portion of the chain corresponds to 703-722; it reads GGKFNFDEMRTRRSTFDNFP. Positions 723-744 form an intramembrane region, pore-forming; it reads QSLLTVFQILTGEDWNSVMYDG. A Selectivity filter of repeat II motif is present at residues 733-736; it reads TGED. Glutamate 735 contributes to the Ca(2+) binding site. Over 745–754 the chain is Extracellular; sequence IMAYGGPSFP. Residues 755-774 traverse the membrane as a helical segment; that stretch reads GMLVCIYFIILFICGNYILL. Residues 775 to 929 lie on the Cytoplasmic side of the membrane; that stretch reads NVFLAIAVDN…LQCHRIVNDT (155 aa). Residues 793 to 890 form a disordered region; sequence SAQKEEEEEK…EMPVGPRPRP (98 aa). Basic and acidic residues predominate over residues 812–835; that stretch reads SPEKKQEVVEKPAVEETKEEKIEL. 2 positions are modified to phosphoserine: serine 837 and serine 844. Residues 858-905 form an interaction with STAC2 region; sequence NENEDKSPYPNPDAAGEEDEEEPEMPVGPRPRPLSELHLKEKAVPMPE. Residues 872-881 show a composition bias toward acidic residues; sequence AGEEDEEEPE. One copy of the III repeat lies at 916 to 1198; it reads NRFRLQCHRI…IFVGFVIVTF (283 aa). Residues 930-948 traverse the membrane as a helical segment; it reads IFTNLILFFILLSSISLAA. The Extracellular portion of the chain corresponds to 949 to 960; that stretch reads EDPVQHTSFRNH. The chain crosses the membrane as a helical span at residues 961–980; the sequence is ILFYFDIVFTTIFTIEIALK. Topologically, residues 981–996 are cytoplasmic; that stretch reads MTAYGAFLHKGSFCRN. A helical transmembrane segment spans residues 997–1015; sequence YFNILDLLVVSVSLISFGI. Over 1016-1022 the chain is Extracellular; it reads QSSAINV. Residues 1023–1041 form a helical membrane-spanning segment; that stretch reads VKILRVLRVLRPLRAINRA. Topologically, residues 1042 to 1060 are cytoplasmic; the sequence is KGLKHVVQCVFVAIRTIGN. Residues 1061–1080 form a helical membrane-spanning segment; sequence IVIVTTLLQFMFACIGVQLF. At 1081–1130 the chain is on the extracellular side; that stretch reads KGKLYTCSDSSKQTEAECKGNYITYKDGEVDQPIIQPRSWENSKFDFDNV. Cysteine 1087 and cysteine 1098 are disulfide-bonded. A dihydropyridine binding region spans residues 1118–1207; that stretch reads RSWENSKFDF…FQEQGEQEYK (90 aa). The pore-forming intramembrane region spans 1131–1151; it reads LAAMMALFTVSTFEGWPELLY. Positions 1142 to 1145 match the Selectivity filter of repeat III motif; sequence TFEG. Glutamate 1144 is a Ca(2+) binding site. The Extracellular segment spans residues 1152–1168; the sequence is RSIDSHTEDKGPIYNYR. Residues 1169–1190 traverse the membrane as a helical segment; that stretch reads VEISIFFIIYIIIIAFFMMNIF. Topologically, residues 1191-1248 are cytoplasmic; the sequence is VGFVIVTFQEQGEQEYKNCELDKNQRQCVEYALKARPLRRYIPKNQHQYKVWYVVNST. Residues 1235 to 1508 form an IV repeat; it reads NQHQYKVWYV…LFVAVVMDNF (274 aa). A helical membrane pass occupies residues 1249 to 1270; that stretch reads YFEYLMFVLILLNTICLAMQHY. The Extracellular portion of the chain corresponds to 1271 to 1278; the sequence is GQSCLFKI. A helical membrane pass occupies residues 1279 to 1300; that stretch reads AMNILNMLFTGLFTVEMILKLI. Residues 1301–1310 are Cytoplasmic-facing; sequence AFKPKHYFCD. The helical transmembrane segment at 1311–1330 threads the bilayer; it reads AWNTFDALIVVGSIVDIAIT. The Extracellular portion of the chain corresponds to 1331-1353; the sequence is EVNPAEHTQCSPSMNAEENSRIS. Residues 1354 to 1372 traverse the membrane as a helical segment; the sequence is ITFFRLFRVMRLVKLLSRG. The Cytoplasmic segment spans residues 1373–1390; that stretch reads EGIRTLLWTFIKSFQALP. The chain crosses the membrane as a helical span at residues 1391 to 1411; that stretch reads YVALLIVMLFFIYAVIGMQVF. The Extracellular segment spans residues 1412 to 1433; the sequence is GKIALNDTTEINRNNNFQTFPQ. Asparagine 1417 is a glycosylation site (N-linked (GlcNAc...) asparagine). The segment at residues 1434-1452 is an intramembrane region (pore-forming); the sequence is AVLLLFRCATGEAWQDIML. Positions 1443–1446 match the Selectivity filter of repeat IV motif; sequence TGEA. Over 1453–1480 the chain is Extracellular; it reads ACMPGKKCAPESDPSNSTEGETPCGSSF. Residues 1459-1527 form a dihydropyridine binding region; it reads KCAPESDPSN…LGPHHLDEFK (69 aa). A disulfide bridge connects residues cysteine 1460 and cysteine 1476. A glycan (N-linked (GlcNAc...) asparagine) is linked at asparagine 1468. The interval 1473 to 1515 is phenylalkylamine binding; the sequence is ETPCGSSFAVFYFISFYMLCAFLIINLFVAVVMDNFDYLTRDW. A helical transmembrane segment spans residues 1481-1505; it reads AVFYFISFYMLCAFLIINLFVAVVM. Over 1506-2169 the chain is Cytoplasmic; that stretch reads DNFDYLTRDW…ADSRVHVRSL (664 aa). Residues 1640–1667 form an important for interaction with STAC1, STAC2 and STAC3 region; the sequence is DEVTVGKFYATFLIQEYFRKFKKRKEQG. The tract at residues 1646–1666 is calmodulin-binding IQ region; sequence KFYATFLIQEYFRKFKKRKEQ. Residues 1680-1699 form an important for localization in at the junctional membrane region; sequence LQAGLRTLHDIGPEIRRAIS. Phosphoserine is present on residues serine 1699 and serine 1720. 2 disordered regions span residues 1761–1793 and 1894–1920; these read KAGN…TGSN and ENRQ…LRSA. Residues 1780–1792 are compositionally biased toward polar residues; it reads STFTPSSYSSTGS. Residues 1894 to 1910 are compositionally biased toward basic and acidic residues; it reads ENRQLTPPEEDKGDTRP. Serine 1927 carries the post-translational modification Phosphoserine.

This sequence belongs to the calcium channel alpha-1 subunit (TC 1.A.1.11) family. CACNA1C subfamily. In terms of assembly, component of a calcium channel complex consisting of a pore-forming alpha subunit (CACNA1C) and ancillary beta, gamma and delta subunits. The channel complex contains alpha, beta, gamma and delta subunits in a 1:1:1:1 ratio, i.e. it contains only one of each type of subunit. CACNA1C channel activity is modulated by ancillary subunits, such as CACNB1, CACNB2, CACNB3, CACNA2D1 and CACNA2D4. Interacts with CACNB1. Interacts with CACNB2. Identified in a complex with CACNA2D4 and CACNB3. Interacts with CACNB3. Interacts with CACNA2D1. Interacts with CACNA2D4. Interacts with the gamma subunits CACNG4, CACNG6, CACNG7 and CACNG8. Interacts with CALM1. Interacts (via the N-terminus and the C-terminal C and IQ motifs) with CABP1; this inhibits Ca(2+)-dependent channel inactivation. The binding via the C motif is calcium independent whereas the binding via IQ requires the presence of calcium and is mutually exclusive with calmodulin binding. The binding to the cytoplasmic N-terminal domain is calcium independent but is essential for the channel modulation. Interacts (via C-terminal CDB motif) with CABP5; in a calcium-dependent manner. Interacts with CIB1; the interaction increases upon cardiomyocytes hypertrophy. Interacts with STAC2 and STAC3; this inhibits channel inactivation. Phosphorylation by PKA at Ser-1927 activates the channel. Elevated levels of blood glucose lead to increased phosphorylation by PKA. In terms of tissue distribution, expressed in heart. Expressed in uterus.

The protein localises to the cell membrane. It is found in the sarcolemma. Its subcellular location is the perikaryon. The protein resides in the postsynaptic density membrane. It localises to the cell projection. The protein localises to the dendrite. It is found in the T-tubule. The enzyme catalyses Ca(2+)(in) = Ca(2+)(out). Inhibited by dihydropyridines (DHP), such as isradipine. Inhibited by nifedipine. Channel activity is regulated by Ca(2+) and calmodulin. Binding of STAC1, STAC2 or STAC3 to a region that overlaps with the calmodulin binding site inhibits channel inactivation by Ca(2+) and calmodulin. Binding of calmodulin or CABP1 at the same regulatory sites results in opposite effects on the channel function. Shear stress and pressure increases calcium channel activity. Pore-forming, alpha-1C subunit of the voltage-gated calcium channel that gives rise to L-type calcium currents. Mediates influx of calcium ions into the cytoplasm, and thereby triggers calcium release from the sarcoplasm. Plays an important role in excitation-contraction coupling in the heart. Required for normal heart development and normal regulation of heart rhythm. Required for normal contraction of smooth muscle cells in blood vessels and in the intestine. Essential for normal blood pressure regulation via its role in the contraction of arterial smooth muscle cells. Long-lasting (L-type) calcium channels belong to the 'high-voltage activated' (HVA) group. The protein is Voltage-dependent L-type calcium channel subunit alpha-1C (CACNA1C) of Cavia porcellus (Guinea pig).